The primary structure comprises 205 residues: Recombination protein RecR (205 aa).

A C4-type zinc finger spans residues 58-75; it reads CSECQNVTDRDSDPCVLC. One can recognise a Toprim domain in the interval 83–182; sequence TVICVVESPV…AVSKIARGIP (100 aa).

The protein belongs to the RecR family.

Functionally, may play a role in DNA repair. It seems to be involved in an RecBC-independent recombinational process of DNA repair. It may act with RecF and RecO. The sequence is that of Recombination protein RecR from Chlorobium phaeobacteroides (strain DSM 266 / SMG 266 / 2430).